A 202-amino-acid polypeptide reads, in one-letter code: Imidazoleglycerol-phosphate dehydratase (202 aa).

This sequence belongs to the imidazoleglycerol-phosphate dehydratase family.

Its subcellular location is the cytoplasm. It catalyses the reaction D-erythro-1-(imidazol-4-yl)glycerol 3-phosphate = 3-(imidazol-4-yl)-2-oxopropyl phosphate + H2O. It participates in amino-acid biosynthesis; L-histidine biosynthesis; L-histidine from 5-phospho-alpha-D-ribose 1-diphosphate: step 6/9. The protein is Imidazoleglycerol-phosphate dehydratase of Mycolicibacterium gilvum (strain PYR-GCK) (Mycobacterium gilvum (strain PYR-GCK)).